The sequence spans 275 residues: Phosphonoacetaldehyde hydrolase (275 aa).

The active-site Nucleophile is aspartate 15. 2 residues coordinate Mg(2+): aspartate 15 and alanine 17. The active-site Schiff-base intermediate with substrate is lysine 56. Mg(2+) is bound at residue aspartate 189.

This sequence belongs to the HAD-like hydrolase superfamily. PhnX family. In terms of assembly, homodimer. Mg(2+) is required as a cofactor.

It carries out the reaction phosphonoacetaldehyde + H2O = acetaldehyde + phosphate + H(+). With respect to regulation, inhibited by phosphite, moderately inhibited by phosphonic acids, the corresponding aminophosphonic acids activate the enzyme. Functionally, involved in phosphonate degradation. This is Phosphonoacetaldehyde hydrolase from Pseudomonas aeruginosa (strain ATCC 15692 / DSM 22644 / CIP 104116 / JCM 14847 / LMG 12228 / 1C / PRS 101 / PAO1).